A 226-amino-acid chain; its full sequence is Enolase-phosphatase E1 (226 aa).

It belongs to the HAD-like hydrolase superfamily. MasA/MtnC family. As to quaternary structure, monomer. Mg(2+) is required as a cofactor.

The catalysed reaction is 5-methylsulfanyl-2,3-dioxopentyl phosphate + H2O = 1,2-dihydroxy-5-(methylsulfanyl)pent-1-en-3-one + phosphate. Its pathway is amino-acid biosynthesis; L-methionine biosynthesis via salvage pathway; L-methionine from S-methyl-5-thio-alpha-D-ribose 1-phosphate: step 3/6. It functions in the pathway amino-acid biosynthesis; L-methionine biosynthesis via salvage pathway; L-methionine from S-methyl-5-thio-alpha-D-ribose 1-phosphate: step 4/6. Functionally, bifunctional enzyme that catalyzes the enolization of 2,3-diketo-5-methylthiopentyl-1-phosphate (DK-MTP-1-P) into the intermediate 2-hydroxy-3-keto-5-methylthiopentenyl-1-phosphate (HK-MTPenyl-1-P), which is then dephosphorylated to form the acireductone 1,2-dihydroxy-3-keto-5-methylthiopentene (DHK-MTPene). This Shewanella sp. (strain W3-18-1) protein is Enolase-phosphatase E1.